Consider the following 443-residue polypeptide: GTPase Der (443 aa).

2 consecutive EngA-type G domains span residues 3–168 and 178–353; these read PLLA…PEAP and VHLA…RNRS. GTP is bound by residues 9 to 16, 56 to 60, 120 to 123, 184 to 191, 231 to 235, and 296 to 299; these read GRPNVGKS, DTGGY, NKVE, DTAGL, and NKWD. In terms of domain architecture, KH-like spans 354–438; sequence QNVSTSQLNK…PISLRFLHKN (85 aa).

Belongs to the TRAFAC class TrmE-Era-EngA-EngB-Septin-like GTPase superfamily. EngA (Der) GTPase family. As to quaternary structure, associates with the 50S ribosomal subunit.

Functionally, GTPase that plays an essential role in the late steps of ribosome biogenesis. The sequence is that of GTPase Der from Chlorobium chlorochromatii (strain CaD3).